The chain runs to 434 residues: Meiosis-specific kinetochore protein (434 aa).

Disordered stretches follow at residues 1–102 (MDKI…PCET) and 249–289 (VFAE…PDNK). Residues 46-62 (KGKEQGLRKITEKKELS) are compositionally biased toward basic and acidic residues. Residues 64 to 76 (LTGSSSQRPSLLS) are compositionally biased toward polar residues. The POLO box domain (PBD)-binding motif lies at 334–336 (STP). The interval 391–394 (EICC) is required for localization to kinetochores. Positions 404-424 (QMRRKDPAVKNRCSPPKDVPL) are disordered.

Interacts with CENPC. Interacts with PLK1; required for recruitment of PLK1 at kinetochores. In terms of tissue distribution, germ cell-specific. Expressed in both testis and ovary. Not expressed in other tissues.

It is found in the chromosome. The protein resides in the centromere. It localises to the kinetochore. In terms of biological role, key regulator of kinetochore function during meiosis I: required both for mono-orientation of kinetochores on sister chromosomes and protection of centromeric cohesin from separase-mediated cleavage. Acts by facilitating kinetochore mono-orientation during meiosis I, when kinetochores on sister chromosomes face the same direction and are thus captured and pulled by spindle fibers from the same pole. Also required to prevent cleavage of cohesin at centromeres during meiosis I, possibly by acting as a regulator of the shugoshin-dependent protection pathway. Acts in collaboration with PLK1: required for PLK1 enrichment to kinetochores. Not required during meiosis II or mitosis. This chain is Meiosis-specific kinetochore protein, found in Mus musculus (Mouse).